Here is a 378-residue protein sequence, read N- to C-terminus: Queuine tRNA-ribosyltransferase (378 aa).

Residue Asp90 is the Proton acceptor of the active site. Residues 90–94, Asp144, Gln188, and Gly220 each bind substrate; that span reads DSGGF. The RNA binding stretch occupies residues 251–257; the sequence is GVGTPED. Asp270 acts as the Nucleophile in catalysis. The RNA binding; important for wobble base 34 recognition stretch occupies residues 275–279; it reads TRNAR. Zn(2+)-binding residues include Cys308, Cys310, Cys313, and His339.

This sequence belongs to the queuine tRNA-ribosyltransferase family. Homodimer. Within each dimer, one monomer is responsible for RNA recognition and catalysis, while the other monomer binds to the replacement base PreQ1. It depends on Zn(2+) as a cofactor.

It carries out the reaction 7-aminomethyl-7-carbaguanine + guanosine(34) in tRNA = 7-aminomethyl-7-carbaguanosine(34) in tRNA + guanine. The protein operates within tRNA modification; tRNA-queuosine biosynthesis. In terms of biological role, catalyzes the base-exchange of a guanine (G) residue with the queuine precursor 7-aminomethyl-7-deazaguanine (PreQ1) at position 34 (anticodon wobble position) in tRNAs with GU(N) anticodons (tRNA-Asp, -Asn, -His and -Tyr). Catalysis occurs through a double-displacement mechanism. The nucleophile active site attacks the C1' of nucleotide 34 to detach the guanine base from the RNA, forming a covalent enzyme-RNA intermediate. The proton acceptor active site deprotonates the incoming PreQ1, allowing a nucleophilic attack on the C1' of the ribose to form the product. After dissociation, two additional enzymatic reactions on the tRNA convert PreQ1 to queuine (Q), resulting in the hypermodified nucleoside queuosine (7-(((4,5-cis-dihydroxy-2-cyclopenten-1-yl)amino)methyl)-7-deazaguanosine). This Nautilia profundicola (strain ATCC BAA-1463 / DSM 18972 / AmH) protein is Queuine tRNA-ribosyltransferase.